The primary structure comprises 1568 residues: Agglutinin-like protein 7 (1568 aa).

The N-terminal stretch at M1–S18 is a signal peptide. 4 cysteine pairs are disulfide-bonded: C74–C151, C97–C113, C206–C299, and C228–C257. ALS repeat units follow at residues T403–P434, I441–P471, V476–P507, and V512–P543. 3 disordered regions span residues E546–S662, L721–T743, and V767–T832. 4 stretches are compositionally biased toward low complexity: residues S547 to S662, L721 to D738, S768 to T793, and S801 to E824. N559 is a glycosylation site (N-linked (GlcNAc...) asparagine). A glycan (N-linked (GlcNAc...) asparagine) is linked at N851. Disordered stretches follow at residues V860–E1030 and E1046–D1097. Low complexity predominate over residues E872–S904. Positions L909 to T918 are enriched in polar residues. A compositionally biased stretch (low complexity) spans S919 to D945. Positions G956–T992 are enriched in polar residues. N988 carries an N-linked (GlcNAc...) asparagine glycan. 2 stretches are compositionally biased toward low complexity: residues S993–V1002 and E1009–E1030. The span at E1046–P1062 shows a compositional bias: polar residues. Residues S1063–D1077 are compositionally biased toward low complexity. N1188 carries N-linked (GlcNAc...) asparagine glycosylation. 2 disordered regions span residues L1194–L1220 and G1271–G1305. Polar residues-rich tracts occupy residues L1272–S1286 and D1294–S1303. The N-linked (GlcNAc...) asparagine glycan is linked to N1284. A lipid anchor (GPI-anchor amidated serine) is attached at S1548. Positions G1549 to F1568 are cleaved as a propeptide — removed in mature form.

It belongs to the ALS family. In terms of processing, the GPI-anchor is attached to the protein in the endoplasmic reticulum and serves to target the protein to the cell surface. There, the glucosamine-inositol phospholipid moiety is cleaved off and the GPI-modified mannoprotein is covalently attached via its lipidless GPI glycan remnant to the 1,6-beta-glucan of the outer cell wall layer.

It is found in the cell membrane. Its subcellular location is the secreted. The protein resides in the cell wall. Cell surface adhesion protein which mediates both yeast-to-host tissue adherence and yeast aggregation. Plays an important role in the pathogenesis of C.albicans infections. This is Agglutinin-like protein 7 (ALS7) from Candida albicans (strain SC5314 / ATCC MYA-2876) (Yeast).